The primary structure comprises 555 residues: Formate--tetrahydrofolate ligase (555 aa).

Position 63 to 70 (T63 to T70) interacts with ATP.

It belongs to the formate--tetrahydrofolate ligase family.

It carries out the reaction (6S)-5,6,7,8-tetrahydrofolate + formate + ATP = (6R)-10-formyltetrahydrofolate + ADP + phosphate. Its pathway is one-carbon metabolism; tetrahydrofolate interconversion. The protein is Formate--tetrahydrofolate ligase of Beijerinckia indica subsp. indica (strain ATCC 9039 / DSM 1715 / NCIMB 8712).